We begin with the raw amino-acid sequence, 593 residues long: MASAVVDSGGSALELPSDGGENQEGGDTGPDCPAVIVEPVPSARLEQGYAAQVLVYDDETYMMQDVAEEQEVETENSETVEASVHSSNAHCTDKTIEAAEALLHMESPTCLRDSRSPVEVFVPPCISTPEFIHAAMRPDVITETVVEVSTEESEPMDASPIPTSPDSHEPMKKKKVGRKPKTQQSPVSNGSPELGIKKKAREGKGNTTYLWEFLLDLLQDKNTCPRYIKWTQREKGIFKLVDSKAVSKLWGKHKNKPDMNYETMGRALRYYYQRGILAKVEGQRLVYQFKDMPKNIVVIDDDKSETCPEDLAAAADDKSLERVSLSAESLLKAATAVRGGKNSSPLNCSRAEKGVARVVNITSPTHDGSSRSPTTTAPVSAAAAPRTVRVAMQVPVVMTSLGQKISAVAVQSVNAGTGSPLITSTSPASASSPKVVIQTVPTVMPASTENGDRITMQPAKIITIPATQLAQCQLQAKSNLTGSGSINIVGTPLAVRALTPVSIAHGTPVMRLSVPAQQASGQTPPRVISALLKGPEGKSEAKKQEHDVKTLQLVEEKGADGNKTVTHVVVVSAPSAIALPVTMKTEGLVTCEK.

The tract at residues 1–34 is disordered; it reads MASAVVDSGGSALELPSDGGENQEGGDTGPDCPA. At S107 the chain carries Phosphoserine. Residues 146-199 form a disordered region; sequence VEVSTEESEPMDASPIPTSPDSHEPMKKKKVGRKPKTQQSPVSNGSPELGIKKK. The segment covering 171-181 has biased composition (basic residues); sequence MKKKKVGRKPK. A Phosphothreonine modification is found at T182. Residues 182–191 are compositionally biased toward polar residues; that stretch reads TQQSPVSNGS. 2 positions are modified to phosphoserine: S185 and S191. Residues 208–290 constitute a DNA-binding region (ETS); that stretch reads TYLWEFLLDL…EGQRLVYQFK (83 aa). A disordered region spans residues 362–383; it reads TSPTHDGSSRSPTTTAPVSAAA. 2 positions are modified to phosphoserine: S363 and S372. Low complexity predominate over residues 370-383; that stretch reads SRSPTTTAPVSAAA. A Phosphothreonine modification is found at T376. The residue at position 432 (S432) is a Phosphoserine. R496 carries the post-translational modification Omega-N-methylarginine. Phosphothreonine is present on T523. K538 participates in a covalent cross-link: Glycyl lysine isopeptide (Lys-Gly) (interchain with G-Cter in SUMO2).

The protein belongs to the ETS family. As to quaternary structure, interacts with LIM domains of LMO2. Interacts via its N-terminal region with RUNX1. As to expression, expressed in all tissues examined. Highest levels in thymocytes and bone marrow.

The protein localises to the nucleus. Functionally, probably transcriptionally activates the LYN and BLK promoters and acts synergistically with RUNX1 to transactivate the BLK promoter. The chain is ETS-related transcription factor Elf-2 from Mus musculus (Mouse).